Here is a 102-residue protein sequence, read N- to C-terminus: Large ribosomal subunit protein bL21 (102 aa).

It belongs to the bacterial ribosomal protein bL21 family. As to quaternary structure, part of the 50S ribosomal subunit. Contacts protein L20.

Its function is as follows. This protein binds to 23S rRNA in the presence of protein L20. This chain is Large ribosomal subunit protein bL21, found in Stenotrophomonas maltophilia (strain K279a).